A 145-amino-acid polypeptide reads, in one-letter code: Lysozyme-like protein 4 (145 aa).

The first 19 residues, Met-1–Ala-19, serve as a signal peptide directing secretion. The C-type lysozyme domain occupies Ser-20 to Leu-145. Cystine bridges form between Cys-25/Cys-143, Cys-49/Cys-130, Cys-84/Cys-95, and Cys-91/Cys-109. Glu-54 is a catalytic residue.

Belongs to the glycosyl hydrolase 22 family. In terms of assembly, monomer. Expressed strongly in testis and in epididymis, and weakly in brain and lung. Detected in sperm (at protein level).

It is found in the secreted. The protein resides in the cytoplasmic vesicle. The protein localises to the secretory vesicle. It localises to the acrosome. Its subcellular location is the cell projection. It is found in the cilium. The protein resides in the flagellum. Its function is as follows. May be involved in fertilization. Has no detectable bacteriolytic in vitro. Has no lysozyme activity in vitro. The chain is Lysozyme-like protein 4 (Lyzl4) from Mus musculus (Mouse).